Here is a 341-residue protein sequence, read N- to C-terminus: Biotin synthase (341 aa).

Positions alanine 40–arginine 267 constitute a Radical SAM core domain. Residues cysteine 55, cysteine 59, and cysteine 62 each contribute to the [4Fe-4S] cluster site. Residues cysteine 99, cysteine 130, cysteine 190, and arginine 262 each contribute to the [2Fe-2S] cluster site.

It belongs to the radical SAM superfamily. Biotin synthase family. As to quaternary structure, homodimer. It depends on [4Fe-4S] cluster as a cofactor. [2Fe-2S] cluster serves as cofactor.

It catalyses the reaction (4R,5S)-dethiobiotin + (sulfur carrier)-SH + 2 reduced [2Fe-2S]-[ferredoxin] + 2 S-adenosyl-L-methionine = (sulfur carrier)-H + biotin + 2 5'-deoxyadenosine + 2 L-methionine + 2 oxidized [2Fe-2S]-[ferredoxin]. It participates in cofactor biosynthesis; biotin biosynthesis; biotin from 7,8-diaminononanoate: step 2/2. Its function is as follows. Catalyzes the conversion of dethiobiotin (DTB) to biotin by the insertion of a sulfur atom into dethiobiotin via a radical-based mechanism. The polypeptide is Biotin synthase (Xylella fastidiosa (strain M12)).